The sequence spans 336 residues: Ketoreductase adrE (336 aa).

Tyr-171 lines the NADP(+) pocket.

It belongs to the NAD(P)-dependent epimerase/dehydratase family. Dihydroflavonol-4-reductase subfamily.

Its pathway is secondary metabolite biosynthesis; terpenoid biosynthesis. In terms of biological role, ketoreductase; part of the gene cluster that mediates the biosynthesis of andrastins, meroterpenoid compounds that exhibit inhibitory activity against ras farnesyltransferase, suggesting that they could be promising leads for antitumor agents. The first step of the pathway is the synthesis of 3,5-dimethylorsellinic acid (DMOA) by the polyketide synthase adrD via condensation of one acetyl-CoA starter unit with 3 malonyl-CoA units and 2 methylations. DMAO is then converted to farnesyl-DMAO by the prenyltransferase adrG. The methyltransferase adrK catalyzes the methylation of the carboxyl group of farnesyl-DMAO to farnesyl-DMAO methyl ester which is further converted to epoxyfarnesyl-DMAO methyl ester by the FAD-dependent monooxygenase adrH. The terpene cyclase adrI then catalyzes the carbon skeletal rearrangement to generate the andrastin E, the first compound in the pathway having the andrastin scaffold, with the tetracyclic ring system. The post-cyclization tailoring enzymes adrF, adrE, adrJ, and adrA, are involved in the conversion of andrastin E into andrastin A. The short chain dehydrogenase adrF is responsible for the oxidation of the C-3 a hydroxyl group of andrastin E to yield the corresponding ketone, andrastin D. The ketoreductase adrE stereoselectively reduces the carbonyl moiety to reverse the stereochemistry of the C-3 position to yield andrastin F. The acetyltransferase adrJ is the acetyltransferase that attaches the acetyl group to the C-3 hydroxyl group of andrastin F to yield andrastin C. Finally, the cytochrome P450 monooxygenase adrA catalyzes two sequential oxidation reactions of the C-23 methyl group, to generate the corresponding alcohol andrastin B, and aldehyde andrastin A. The sequence is that of Ketoreductase adrE from Penicillium rubens (strain ATCC 28089 / DSM 1075 / NRRL 1951 / Wisconsin 54-1255) (Penicillium chrysogenum).